The following is a 488-amino-acid chain: 3-octaprenyl-4-hydroxybenzoate carboxy-lyase (488 aa).

Residue Asn-172 participates in Mn(2+) binding. Prenylated FMN-binding positions include 175-177 (IYR), 189-191 (RWL), and 194-195 (RG). Glu-238 lines the Mn(2+) pocket. Residue Asp-287 is the Proton donor of the active site.

Belongs to the UbiD family. Homohexamer. It depends on prenylated FMN as a cofactor. Mn(2+) serves as cofactor.

It is found in the cell membrane. The catalysed reaction is a 4-hydroxy-3-(all-trans-polyprenyl)benzoate + H(+) = a 2-(all-trans-polyprenyl)phenol + CO2. It participates in cofactor biosynthesis; ubiquinone biosynthesis. Catalyzes the decarboxylation of 3-octaprenyl-4-hydroxy benzoate to 2-octaprenylphenol, an intermediate step in ubiquinone biosynthesis. This Pseudomonas fluorescens (strain SBW25) protein is 3-octaprenyl-4-hydroxybenzoate carboxy-lyase.